Here is a 435-residue protein sequence, read N- to C-terminus: Sulfopropanediol 3-dehydrogenase (435 aa).

NAD(+)-binding residues include Tyr119, Gln181, and Asn204. Zn(2+) is bound by residues Gln249 and His252. Catalysis depends on proton acceptor residues Glu319 and His320. Positions 353 and 412 each coordinate Zn(2+).

Belongs to the histidinol dehydrogenase family. HpsN subfamily. Zn(2+) is required as a cofactor.

It catalyses the reaction (2R)-3-sulfopropanediol + 2 NAD(+) + H2O = (2R)-3-sulfolactate + 2 NADH + 3 H(+). Catalyzes the NAD-dependent oxidation of (R)-2,3-dihydroxypropane-1-sulfonate to (R)-3-sulfolactate. The protein is Sulfopropanediol 3-dehydrogenase of Ruegeria pomeroyi (strain ATCC 700808 / DSM 15171 / DSS-3) (Silicibacter pomeroyi).